A 239-amino-acid chain; its full sequence is Putative CCR4-associated factor 1 homolog 8 (239 aa).

Residues D17, E19, D133, and N204 each contribute to the a divalent metal cation site.

The protein belongs to the CAF1 family. Component of the CCR4-NOT complex, at least composed of CRR4 and CAF1 proteins. It depends on a divalent metal cation as a cofactor.

The protein resides in the nucleus. The protein localises to the cytoplasm. It carries out the reaction Exonucleolytic cleavage of poly(A) to 5'-AMP.. Ubiquitous transcription factor required for a diverse set of processes. It is a component of the CCR4 complex involved in the control of gene expression. The chain is Putative CCR4-associated factor 1 homolog 8 (CAF1-8) from Arabidopsis thaliana (Mouse-ear cress).